We begin with the raw amino-acid sequence, 431 residues long: Adenosylhomocysteinase (431 aa).

3 residues coordinate substrate: Thr-56, Asp-131, and Glu-156. Thr-157–Thr-159 is a binding site for NAD(+). 2 residues coordinate substrate: Lys-186 and Asp-190. NAD(+)-binding positions include Asn-191, Gly-222–Gly-227, Glu-243, Ile-299–His-301, and Asn-345.

The protein belongs to the adenosylhomocysteinase family. As to quaternary structure, homotetramer. NAD(+) is required as a cofactor.

It carries out the reaction S-adenosyl-L-homocysteine + H2O = L-homocysteine + adenosine. Its pathway is amino-acid biosynthesis; L-homocysteine biosynthesis; L-homocysteine from S-adenosyl-L-homocysteine: step 1/1. In terms of biological role, adenosylhomocysteine is a competitive inhibitor of S-adenosyl-L-methionine-dependent methyl transferase reactions; therefore adenosylhomocysteinase may play a key role in the control of methylations via regulation of the intracellular concentration of adenosylhomocysteine. This is Adenosylhomocysteinase (sahA) from Dictyostelium discoideum (Social amoeba).